Reading from the N-terminus, the 545-residue chain is Chaperonin GroEL (545 aa).

ATP is bound by residues 31–34, 88–92, G415, 478–480, and D494; these read TLGP, DGTTT, and NAA.

It belongs to the chaperonin (HSP60) family. As to quaternary structure, forms a cylinder of 14 subunits composed of two heptameric rings stacked back-to-back. Interacts with the co-chaperonin GroES.

It is found in the cytoplasm. It catalyses the reaction ATP + H2O + a folded polypeptide = ADP + phosphate + an unfolded polypeptide.. Together with its co-chaperonin GroES, plays an essential role in assisting protein folding. The GroEL-GroES system forms a nano-cage that allows encapsulation of the non-native substrate proteins and provides a physical environment optimized to promote and accelerate protein folding. This Streptococcus pyogenes serotype M4 (strain MGAS10750) protein is Chaperonin GroEL.